Reading from the N-terminus, the 96-residue chain is Neutrophil defensin 8 (96 aa).

Positions 1 to 19 (MRTLVILAAILLVALQAQA) are cleaved as a signal peptide. The propeptide occupies 20–66 (EPLQARTDEATAAQEQIPTDNPEVVVSLAWDESLAPKDSVPGLRKNM). 3 disulfides stabilise this stretch: cysteine 68–cysteine 96, cysteine 70–cysteine 85, and cysteine 75–cysteine 95.

This sequence belongs to the alpha-defensin family.

The protein localises to the secreted. Probable antibiotic and antifungal activity. The sequence is that of Neutrophil defensin 8 from Macaca mulatta (Rhesus macaque).